Here is a 164-residue protein sequence, read N- to C-terminus: Phosphopantetheine adenylyltransferase (164 aa).

Thr-10 serves as a coordination point for substrate. Residues 10–11 (TF) and His-18 each bind ATP. The substrate site is built by Lys-42, Thr-79, and Arg-93. ATP contacts are provided by residues 94 to 96 (GLR), Glu-104, and 129 to 135 (NQIISSR).

It belongs to the bacterial CoaD family. Homohexamer. Mg(2+) is required as a cofactor.

Its subcellular location is the cytoplasm. The catalysed reaction is (R)-4'-phosphopantetheine + ATP + H(+) = 3'-dephospho-CoA + diphosphate. It functions in the pathway cofactor biosynthesis; coenzyme A biosynthesis; CoA from (R)-pantothenate: step 4/5. Functionally, reversibly transfers an adenylyl group from ATP to 4'-phosphopantetheine, yielding dephospho-CoA (dPCoA) and pyrophosphate. The chain is Phosphopantetheine adenylyltransferase from Pelagibacter ubique (strain HTCC1062).